The sequence spans 421 residues: 4-hydroxy-3-methylbut-2-en-1-yl diphosphate synthase (flavodoxin) (421 aa).

Positions 311, 314, 357, and 364 each coordinate [4Fe-4S] cluster.

Belongs to the IspG family. [4Fe-4S] cluster serves as cofactor.

It carries out the reaction (2E)-4-hydroxy-3-methylbut-2-enyl diphosphate + oxidized [flavodoxin] + H2O + 2 H(+) = 2-C-methyl-D-erythritol 2,4-cyclic diphosphate + reduced [flavodoxin]. It functions in the pathway isoprenoid biosynthesis; isopentenyl diphosphate biosynthesis via DXP pathway; isopentenyl diphosphate from 1-deoxy-D-xylulose 5-phosphate: step 5/6. In terms of biological role, converts 2C-methyl-D-erythritol 2,4-cyclodiphosphate (ME-2,4cPP) into 1-hydroxy-2-methyl-2-(E)-butenyl 4-diphosphate. This chain is 4-hydroxy-3-methylbut-2-en-1-yl diphosphate synthase (flavodoxin), found in Xanthomonas axonopodis pv. citri (strain 306).